The primary structure comprises 178 residues: Large ribosomal subunit protein uL6 (178 aa).

Residues 155–169 (PYKGKGIKYDNEQIR) are compositionally biased toward basic and acidic residues. The segment at 155 to 178 (PYKGKGIKYDNEQIRRKAGKSGGK) is disordered.

It belongs to the universal ribosomal protein uL6 family. As to quaternary structure, part of the 50S ribosomal subunit.

Functionally, this protein binds to the 23S rRNA, and is important in its secondary structure. It is located near the subunit interface in the base of the L7/L12 stalk, and near the tRNA binding site of the peptidyltransferase center. This is Large ribosomal subunit protein uL6 from Nitratidesulfovibrio vulgaris (strain DSM 19637 / Miyazaki F) (Desulfovibrio vulgaris).